The chain runs to 627 residues: Neutral endopeptidase (627 aa).

Residues Met1–Trp627 enclose the Peptidase M13 domain. Position 475 (His475) interacts with Zn(2+). The active site involves Glu476. The Zn(2+) site is built by His479 and Glu535. Asp539 acts as the Proton donor in catalysis.

This sequence belongs to the peptidase M13 family. As to quaternary structure, monomer. It depends on Zn(2+) as a cofactor.

Functionally, endopeptidase with broad substrate specificity for several oligopeptides. The chain is Neutral endopeptidase (pepO) from Lactococcus lactis subsp. lactis (strain IL1403) (Streptococcus lactis).